Consider the following 262-residue polypeptide: Ribosomal RNA small subunit methyltransferase A (262 aa).

The S-adenosyl-L-methionine site is built by Asn14, Leu16, Gly41, Glu62, Asp87, and Asn109.

This sequence belongs to the class I-like SAM-binding methyltransferase superfamily. rRNA adenine N(6)-methyltransferase family. RsmA subfamily.

Its subcellular location is the cytoplasm. The catalysed reaction is adenosine(1518)/adenosine(1519) in 16S rRNA + 4 S-adenosyl-L-methionine = N(6)-dimethyladenosine(1518)/N(6)-dimethyladenosine(1519) in 16S rRNA + 4 S-adenosyl-L-homocysteine + 4 H(+). Its function is as follows. Specifically dimethylates two adjacent adenosines (A1518 and A1519) in the loop of a conserved hairpin near the 3'-end of 16S rRNA in the 30S particle. May play a critical role in biogenesis of 30S subunits. In Francisella tularensis subsp. novicida (strain U112), this protein is Ribosomal RNA small subunit methyltransferase A.